The sequence spans 73 residues: Large ribosomal subunit protein uL29 (73 aa).

This sequence belongs to the universal ribosomal protein uL29 family.

This chain is Large ribosomal subunit protein uL29 (rpl29), found in Saccharolobus solfataricus (strain ATCC 35092 / DSM 1617 / JCM 11322 / P2) (Sulfolobus solfataricus).